Consider the following 173-residue polypeptide: Archaemetzincin (173 aa).

Residue His-130 participates in Zn(2+) binding. The active-site Proton acceptor is Glu-131. Zn(2+) is bound by residues His-134, His-140, Cys-141, Cys-146, Cys-165, and Cys-168.

This sequence belongs to the peptidase M54 family. As to quaternary structure, monomer. It depends on Zn(2+) as a cofactor.

In terms of biological role, probable zinc metalloprotease whose natural substrate is unknown. This is Archaemetzincin from Natronomonas pharaonis (strain ATCC 35678 / DSM 2160 / CIP 103997 / JCM 8858 / NBRC 14720 / NCIMB 2260 / Gabara) (Halobacterium pharaonis).